A 206-amino-acid chain; its full sequence is Outer-membrane lipoprotein carrier protein (206 aa).

The first 21 residues, 1-21, serve as a signal peptide directing secretion; sequence MKKLLCAVLLSPLLYSNAVLA.

The protein belongs to the LolA family. As to quaternary structure, monomer.

It localises to the periplasm. Participates in the translocation of lipoproteins from the inner membrane to the outer membrane. Only forms a complex with a lipoprotein if the residue after the N-terminal Cys is not an aspartate (The Asp acts as a targeting signal to indicate that the lipoprotein should stay in the inner membrane). This chain is Outer-membrane lipoprotein carrier protein, found in Shewanella sp. (strain ANA-3).